Consider the following 440-residue polypeptide: Endoplasmic reticulum junction formation protein lunapark (440 aa).

At 1–45 (MGALLAKWRAKPSTVEVLEKMEKDIQSLEEFRDKNQKLRKIWVAR) the chain is on the cytoplasmic side. The stretch at 16–40 (EVLEKMEKDIQSLEEFRDKNQKLRK) forms a coiled coil. The helical transmembrane segment at 46–66 (LFFYSTILYILTSLTVYLWYL) threads the bilayer. Over 67 to 77 (PGGMTARLLTT) the chain is Lumenal. The chain crosses the membrane as a helical span at residues 78 to 98 (LLFLLFPVLIWFVRTLLILWF). At 99–440 (SRRTERNNDA…ESEESFMETE (342 aa)) the chain is on the cytoplasmic side. Positions 100 to 128 (RRTERNNDALELLKAEKKKILEEVMEKET) form a coiled coil. The segment at 149–169 (LELPVPGPPITPRPGQDLRQR) is disordered. T159 carries the phosphothreonine modification. Residues S177, S179, S188, and S192 each carry the phosphoserine modification. T198 carries the phosphothreonine modification. Residues 202-247 (QRDTSAPGGPPERSVQPTPQSNILQRRPGSPATAVSGMALHPPGPP) are disordered. A phosphoserine mark is found at S206 and S215. Residues 216–225 (VQPTPQSNIL) are compositionally biased toward polar residues. The residue at position 219 (T219) is a Phosphothreonine. 2 positions are modified to phosphoserine: S222 and S231. The segment at 280–305 (CQQCFSHNGMALKEEFEYVAFRCAYC) adopts a C4-type; plays a role in ER morphology zinc-finger fold. A disordered region spans residues 316–440 (PQAPRLQEIS…ESEESFMETE (125 aa)). Residue S325 is modified to Phosphoserine. Residues 334–343 (DSQGSVNTLQ) are compositionally biased toward polar residues. Composition is skewed to acidic residues over residues 370–411 (QAIE…DDTE) and 431–440 (ESEESFMETE).

It belongs to the lunapark family. In terms of assembly, homodimer; homodimerization requires the C4-type zinc finger motif and decreases during mitosis in a phosphorylation-dependent manner. Post-translationally, phosphorylated. Phosphorylation at Thr-159 and Ser-325 occurs during interphase. Phosphorylation at Ser-177, Ser-179, Ser-188, Ser-192, Thr-198, Ser-206, Ser-215, Thr-219, Ser-222 and Ser-231 occurs during mitosis; these phosphorylations reduce both its homodimerization and the ER three-way tubular junction formation.

The protein localises to the endoplasmic reticulum membrane. Its function is as follows. Endoplasmic reticulum (ER)-shaping membrane protein that plays a role in determining ER morphology. Involved in the stabilization of nascent three-way ER tubular junctions within the ER network. May also play a role as a curvature-stabilizing protein within three-way ER tubular junction network. The polypeptide is Endoplasmic reticulum junction formation protein lunapark (lnpk) (Xenopus laevis (African clawed frog)).